Here is a 323-residue protein sequence, read N- to C-terminus: Ethanolamine-phosphate cytidylyltransferase (323 aa).

It belongs to the cytidylyltransferase family.

The protein localises to the cytoplasm. It localises to the nucleus. It catalyses the reaction phosphoethanolamine + CTP + H(+) = CDP-ethanolamine + diphosphate. It functions in the pathway phospholipid metabolism; phosphatidylethanolamine biosynthesis; phosphatidylethanolamine from ethanolamine: step 2/3. Ethanolamine-phosphate cytidylyltransferase which catalyzes the second step of phosphatidylethanolamine biosynthesis. Involved in the maintenance of plasma membrane and required for proper sporulation. The chain is Ethanolamine-phosphate cytidylyltransferase from Saccharomyces cerevisiae (strain ATCC 204508 / S288c) (Baker's yeast).